The sequence spans 186 residues: MNAKRAIPVRERNIVLIGFMGVGKTTIGQLVAKKLYRDFIDIDQQIEKDFNMSIPEIFEKKGEDFFRKTEKEYILDICHHKRFKIVSLGGGSFKQEEIRNCCLENCLVLHLDLSWENWKQRADLLIESRPVLHNRSMDEMEQLFNERKVIYDKHNSKVATDNLSPEEVADYIVETLKIGWDLYQPM.

21 to 26 provides a ligand contact to ATP; sequence GVGKTT. Threonine 25 is a Mg(2+) binding site. 3 residues coordinate substrate: aspartate 43, arginine 67, and glycine 90. Position 129 (arginine 129) interacts with ATP. Residue arginine 147 coordinates substrate.

The protein belongs to the shikimate kinase family. As to quaternary structure, monomer. It depends on Mg(2+) as a cofactor.

Its subcellular location is the cytoplasm. It catalyses the reaction shikimate + ATP = 3-phosphoshikimate + ADP + H(+). It participates in metabolic intermediate biosynthesis; chorismate biosynthesis; chorismate from D-erythrose 4-phosphate and phosphoenolpyruvate: step 5/7. Catalyzes the specific phosphorylation of the 3-hydroxyl group of shikimic acid using ATP as a cosubstrate. The protein is Shikimate kinase of Bacillus subtilis (strain 168).